The sequence spans 368 residues: Interferon-stimulated 20 kDa exonuclease-like 2 (368 aa).

Disordered regions lie at residues 33 to 107 (FLEQ…APSK) and 127 to 187 (PKTK…PTVP). Positions 42–54 (KKNQPPNKVSKLN) are enriched in polar residues. Residues 77 to 96 (KKKEAAASKRDSERSKDKKA) are compositionally biased toward basic and acidic residues. The segment covering 131 to 145 (STQKKGSKKKSLKKK) has biased composition (basic residues). The Exonuclease domain maps to 194–368 (MVAIDCEMVG…QHLAQNPPEN (175 aa)).

It is found in the nucleus. The protein resides in the nucleolus. Its function is as follows. 3'-&gt; 5'-exoribonuclease involved in ribosome biogenesis in the processing of the 12S pre-rRNA. Displays a strong specificity for a 3'-end containing a free hydroxyl group. In Mus musculus (Mouse), this protein is Interferon-stimulated 20 kDa exonuclease-like 2 (Isg20l2).